Here is a 155-residue protein sequence, read N- to C-terminus: Small ribosomal subunit protein uS7 (155 aa).

This sequence belongs to the universal ribosomal protein uS7 family. In terms of assembly, part of the 30S ribosomal subunit. Contacts proteins S9 and S11.

Functionally, one of the primary rRNA binding proteins, it binds directly to 16S rRNA where it nucleates assembly of the head domain of the 30S subunit. Is located at the subunit interface close to the decoding center, probably blocks exit of the E-site tRNA. The polypeptide is Small ribosomal subunit protein uS7 (Cytophaga hutchinsonii (strain ATCC 33406 / DSM 1761 / CIP 103989 / NBRC 15051 / NCIMB 9469 / D465)).